Here is a 283-residue protein sequence, read N- to C-terminus: MYKDRSGGGIMGGGGSSRSEILGGAIDRKRINDALDKHLKKSSPSTSRVFTSKDKDSVPSTSTAKSQLHSRSPDVESDTDSEGSDVSGSEGDDTSWISWFCNLRGNEFFCEVDEDYIQDDFNLCGLSGQVPYYDYALDLILDVESSNGDMFTEEQHEMVESAAEMLYGLIHVRYILTTKGMAAMMEKYKNYDFGRCPRVFCCGQSCLPVGQSDIPRSSTVKIYCPKCEDIYYPRSKYQGNIDGAYFGTTFPHLFLMAYGNMKPQKPAQNYVPKIFGFKVHNKQ.

Disordered stretches follow at residues 1-23 (MYKDRSGGGIMGGGGSSRSEILG) and 35-92 (LDKH…SEGD). The segment covering 7–16 (GGGIMGGGGS) has biased composition (gly residues). Positions 58-70 (VPSTSTAKSQLHS) are enriched in polar residues.

Belongs to the casein kinase 2 subunit beta family. In terms of assembly, heterotetramer of two catalytic alpha subunits and two regulatory beta subunits. In terms of processing, phosphorylated by alpha subunit.

Its subcellular location is the cytoplasm. It localises to the cytosol. Functionally, plays a complex role in regulating the basal catalytic activity of the alpha subunit. The tetrameric holoenzyme CK2, composed of two alpha and two beta subunits, phosphorylates the transcription factor PIF1 after an exposure to light, resulting in a proteasome-dependent degradation of PIF1 and promotion of photomorphogenesis. CK2 phosphorylates translation initiation factors. May participate in the regulation of the initiation of translation. This is Putative casein kinase II subunit beta-4 from Arabidopsis thaliana (Mouse-ear cress).